The sequence spans 433 residues: Pyrimidine-nucleoside phosphorylase (433 aa).

Phosphate is bound at residue 81 to 83 (KHS). Residues glycine 88 and threonine 90 each coordinate K(+). Phosphate is bound by residues threonine 92, 108-110 (KMS), and threonine 120. Substrate-binding residues include arginine 168 and lysine 187. K(+)-binding residues include leucine 243, alanine 246, and glutamate 255.

Belongs to the thymidine/pyrimidine-nucleoside phosphorylase family. In terms of assembly, homodimer. K(+) is required as a cofactor.

It carries out the reaction uridine + phosphate = alpha-D-ribose 1-phosphate + uracil. It catalyses the reaction thymidine + phosphate = 2-deoxy-alpha-D-ribose 1-phosphate + thymine. The catalysed reaction is 2'-deoxyuridine + phosphate = 2-deoxy-alpha-D-ribose 1-phosphate + uracil. Its function is as follows. Catalyzes phosphorolysis of the pyrimidine nucleosides uridine, thymidine and 2'-deoxyuridine with the formation of the corresponding pyrimidine base and ribose-1-phosphate. The sequence is that of Pyrimidine-nucleoside phosphorylase (pdp) from Staphylococcus haemolyticus (strain JCSC1435).